The primary structure comprises 843 residues: Protein P (843 aa).

The segment at 1–177 is terminal protein domain (TP); sequence MPLSYPHFRK…FCGSPYSWEQ (177 aa). Residues 178–346 form a spacer region; the sequence is ELQHGSTSIN…YCLSHIINLL (169 aa). Disordered stretches follow at residues 202-221 and 285-310; these read SGILSRPSAGSSIQGKFQQS and TNPSLSTSKRHSSTGHAVELHSVPPG. Residues 347–690 form a polymerase/reverse transcriptase domain (RT) region; it reads EDWGPCYEHG…YMNLYPVARQ (344 aa). A Reverse transcriptase domain is found at 357 to 600; it reads QHHIRTPRTP…YTLNFMGYVI (244 aa). Residues Asp-429, Asp-551, and Asp-552 each contribute to the Mg(2+) site.

It belongs to the hepadnaviridae P protein family.

It carries out the reaction DNA(n) + a 2'-deoxyribonucleoside 5'-triphosphate = DNA(n+1) + diphosphate. It catalyses the reaction Endonucleolytic cleavage to 5'-phosphomonoester.. Its activity is regulated as follows. Activated by host HSP70 and HSP40 in vitro to be able to bind the epsilon loop of the pgRNA. Because deletion of the RNase H region renders the protein partly chaperone-independent, the chaperones may be needed indirectly to relieve occlusion of the RNA-binding site by this domain. Inhibited by several reverse-transcriptase inhibitors: Lamivudine, Adefovir and Entecavir. Functionally, multifunctional enzyme that converts the viral RNA genome into dsDNA in viral cytoplasmic capsids. This enzyme displays a DNA polymerase activity that can copy either DNA or RNA templates, and a ribonuclease H (RNase H) activity that cleaves the RNA strand of RNA-DNA heteroduplexes in a partially processive 3'- to 5'-endonucleasic mode. Neo-synthesized pregenomic RNA (pgRNA) are encapsidated together with the P protein, and reverse-transcribed inside the nucleocapsid. Initiation of reverse-transcription occurs first by binding the epsilon loop on the pgRNA genome, and is initiated by protein priming, thereby the 5'-end of (-)DNA is covalently linked to P protein. Partial (+)DNA is synthesized from the (-)DNA template and generates the relaxed circular DNA (RC-DNA) genome. After budding and infection, the RC-DNA migrates in the nucleus, and is converted into a plasmid-like covalently closed circular DNA (cccDNA). The activity of P protein does not seem to be necessary for cccDNA generation, and is presumably released from (+)DNA by host nuclear DNA repair machinery. The chain is Protein P from Hepatitis B virus genotype F1 (isolate Argentina/sa11/2000) (HBV-F).